The following is a 490-amino-acid chain: MLSVIFDSFPAFSADAPRAVVLLCDAASGETFAALDKASAGAVSRAVALKGFKGEAGQSVVLPAPAEGLSQVVLAGVKPKGGAAVDAVAIENAAGRAVRLLEGVESAVLALSEGLEQFAPDAALGARLASYDFDVYRTKKSESRPVLKTLHVAVSDVAAAQTRWAALDAVSQGVILTRNLVSEPPNVLYPQTFTQRIEELRELGLTVEVLDEKAMTELGFGALLGVAQGSVHKPRTVIVRHNGGGSEAPLAFIGKGVTFDSGGISIKPAAGMDEMKTDMGGAATVIGLMSALARRKALVNAIGVVGLVENMVSGGAQRPGDIVRAYDGQTIEVLNTDAEGRLVLADVLSYTRKRFSPKLMVNLATLTGAIVVSLGYENAGLFSNSDALAKGLSEAGAQVGEGLWRMPMGEAYNRELNSDIADMKNIGGRPGSAILAAEFLKRFVGDTDWAHLDIAGTAWKTKASAIAPKGATGFGVRLLDCFVKAHEASA.

Mn(2+)-binding residues include Lys255 and Asp260. The active site involves Lys267. Residues Asp278, Asp337, and Glu339 each coordinate Mn(2+). Arg341 is an active-site residue.

It belongs to the peptidase M17 family. Mn(2+) is required as a cofactor.

It localises to the cytoplasm. It carries out the reaction Release of an N-terminal amino acid, Xaa-|-Yaa-, in which Xaa is preferably Leu, but may be other amino acids including Pro although not Arg or Lys, and Yaa may be Pro. Amino acid amides and methyl esters are also readily hydrolyzed, but rates on arylamides are exceedingly low.. The enzyme catalyses Release of an N-terminal amino acid, preferentially leucine, but not glutamic or aspartic acids.. Presumably involved in the processing and regular turnover of intracellular proteins. Catalyzes the removal of unsubstituted N-terminal amino acids from various peptides. The polypeptide is Probable cytosol aminopeptidase (Gluconobacter oxydans (strain 621H) (Gluconobacter suboxydans)).